The primary structure comprises 177 residues: Large ribosomal subunit protein uL6 (177 aa).

The protein belongs to the universal ribosomal protein uL6 family. As to quaternary structure, part of the 50S ribosomal subunit.

In terms of biological role, this protein binds to the 23S rRNA, and is important in its secondary structure. It is located near the subunit interface in the base of the L7/L12 stalk, and near the tRNA binding site of the peptidyltransferase center. In Aeromonas hydrophila subsp. hydrophila (strain ATCC 7966 / DSM 30187 / BCRC 13018 / CCUG 14551 / JCM 1027 / KCTC 2358 / NCIMB 9240 / NCTC 8049), this protein is Large ribosomal subunit protein uL6.